The following is a 227-amino-acid chain: Potassium/proton antiporter CemA (227 aa).

4 helical membrane-spanning segments follow: residues 5 to 25 (SISLLYLISIVFLPWCISFTF), 112 to 132 (IICFFILSGYSILGNQELILI), 143 to 163 (LSDTIKAFSILLLTDLCIGFH), and 187 to 207 (IISGLVSTFPVILDTIFKYWI).

Belongs to the CemA family.

The protein localises to the plastid. It localises to the chloroplast inner membrane. The catalysed reaction is K(+)(in) + H(+)(out) = K(+)(out) + H(+)(in). Functionally, contributes to K(+)/H(+) antiport activity by supporting proton efflux to control proton extrusion and homeostasis in chloroplasts in a light-dependent manner to modulate photosynthesis. Prevents excessive induction of non-photochemical quenching (NPQ) under continuous-light conditions. Indirectly promotes efficient inorganic carbon uptake into chloroplasts. This Phaseolus vulgaris (Kidney bean) protein is Potassium/proton antiporter CemA.